The following is a 489-amino-acid chain: Lysine--tRNA ligase (489 aa).

2 residues coordinate Mg(2+): Glu-399 and Glu-406.

Belongs to the class-II aminoacyl-tRNA synthetase family. In terms of assembly, homodimer. The cofactor is Mg(2+).

Its subcellular location is the cytoplasm. The enzyme catalyses tRNA(Lys) + L-lysine + ATP = L-lysyl-tRNA(Lys) + AMP + diphosphate. In Roseiflexus castenholzii (strain DSM 13941 / HLO8), this protein is Lysine--tRNA ligase.